A 401-amino-acid polypeptide reads, in one-letter code: 3-hydroxyisobutyryl-CoA hydrolase-like protein 1, mitochondrial (401 aa).

The N-terminal 26 residues, 1-26, are a transit peptide targeting the mitochondrion; it reads MHNAKGLLGRIVRDKLWRFGYRRSLC.

This sequence belongs to the enoyl-CoA hydratase/isomerase family.

It is found in the mitochondrion. The sequence is that of 3-hydroxyisobutyryl-CoA hydrolase-like protein 1, mitochondrial from Arabidopsis thaliana (Mouse-ear cress).